Consider the following 151-residue polypeptide: UPF0178 protein YaiI (151 aa).

Belongs to the UPF0178 family.

The chain is UPF0178 protein YaiI from Salmonella choleraesuis (strain SC-B67).